The chain runs to 203 residues: ESCRT-related protein CHMP1B (203 aa).

2 coiled-coil regions span residues Asp-13–Ala-51 and Gly-109–Ala-140. The tract at residues Pro-172–Gly-203 is disordered. The segment covering Leu-192–Gly-203 has biased composition (basic and acidic residues).

Belongs to the SNF7 family. In terms of assembly, interacts with CHMP1A and LIP5. Interacts with VPS2.2.

It is found in the cytoplasm. Its subcellular location is the endosome membrane. Functionally, involved in ESCRT-dependent multivesicular body (MVB) formation and sorting of endosomal cargo proteins into MVBs. Mediates the MVB sorting of the auxin carriers PIN1, PIN2 and AUX1. Required for embryonic axis establishment and seedling growth. Required for autophagic degradation of plastid proteins. Promotes the efficient sequestration of cargo from plastids into autophagosomes. Mediates the efficient delivery of autophagic plastid bodies to the vacuole, but not into the cytoplasm. In Arabidopsis thaliana (Mouse-ear cress), this protein is ESCRT-related protein CHMP1B.